The following is a 768-amino-acid chain: Actin filament-associated protein 1-like 1 (768 aa).

A disordered region spans residues 83–145 (LRDMSDDGEP…GKSPEYISSH (63 aa)). 5 positions are modified to phosphoserine: Ser-87, Ser-93, Ser-97, Ser-103, and Ser-153. The segment covering 165 to 185 (SYPTTRMNGELKNSYNDSDAM) has biased composition (polar residues). The tract at residues 165–211 (SYPTTRMNGELKNSYNDSDAMSSSYESYDEEEEEEKGRQPKHQWPSE) is disordered. Residues 220-316 (DCRICAFLLR…WLKVIREVSR (97 aa)) form the PH 1 domain. Phosphoserine is present on residues Ser-329 and Ser-343. Basic and acidic residues predominate over residues 340 to 349 (KRLSQEKQNS). The segment at 340–382 (KRLSQEKQNSDSDSLGMNDSGSTLGRREACEHGKGKKNSLAEL) is disordered. Residues 350-362 (DSDSLGMNDSGST) show a composition bias toward polar residues. The PH 2 domain maps to 418–512 (EVPCCGYLNV…WLGLLLVEMG (95 aa)). Tyr-557 carries the phosphotyrosine modification. Residues 564 to 609 (KVQDEEPQRPTGAQVKRHASSCSEKSHRADPQVKVKRHASSANQYK) are disordered. Positions 587-596 (EKSHRADPQV) are enriched in basic and acidic residues. Residues 611–701 (GKNRAEEDAR…AVKERLQQSL (91 aa)) are a coiled coil. The disordered stretch occupies residues 705-768 (PALGLSVSNK…KAKEWEMKKT (64 aa)). Residues 710–734 (SVSNKNKSQDTTNKPQSNAPEQSLP) are compositionally biased toward polar residues. Ser-747 carries the post-translational modification Phosphoserine. The segment covering 759–768 (KAKEWEMKKT) has biased composition (basic and acidic residues).

As to quaternary structure, interacts with CTTN.

Its subcellular location is the cytoplasm. The protein localises to the cell projection. It is found in the podosome. The protein resides in the invadopodium. It localises to the cytoskeleton. Its subcellular location is the stress fiber. May be involved in podosome and invadosome formation. This chain is Actin filament-associated protein 1-like 1 (Afap1l1), found in Mus musculus (Mouse).